A 968-amino-acid polypeptide reads, in one-letter code: Translation initiation factor IF-2 (968 aa).

Residues 51 to 76 (PAAGASKSEAPAAAPKAPASPAATRP) are compositionally biased toward low complexity. A disordered region spans residues 51–369 (PAAGASKSEA…GVSVPRGDGN (319 aa)). Residues 77–87 (APAPGPAAPKA) show a composition bias toward pro residues. Positions 93–102 (EAPAAASAPS) are enriched in low complexity. Positions 103–112 (APAPAAPAPA) are enriched in pro residues. Composition is skewed to low complexity over residues 113 to 122 (APAAAASAPS), 128 to 170 (APST…GNNP), and 239 to 254 (GARP…PGAR). Gly residues predominate over residues 281–336 (GRPGGGGRGPGRPGGAPGTGGAPGAGGGAPAGGGFGKGGRGRGGTQGAFGKGGAGR). A compositionally biased stretch (basic residues) spans 337 to 346 (GKQRKSKRAK). Positions 461–632 (ARPPVVTVMG…AVLLTADAAL (172 aa)) constitute a tr-type G domain. Residues 470-477 (GHVDHGKT) form a G1 region. 470–477 (GHVDHGKT) lines the GTP pocket. Positions 495-499 (GITQH) are G2. The segment at 520–523 (DTPG) is G3. GTP-binding positions include 520–524 (DTPGH) and 574–577 (NKID). The interval 574-577 (NKID) is G4. A G5 region spans residues 610–612 (SAR).

This sequence belongs to the TRAFAC class translation factor GTPase superfamily. Classic translation factor GTPase family. IF-2 subfamily.

The protein localises to the cytoplasm. Its function is as follows. One of the essential components for the initiation of protein synthesis. Protects formylmethionyl-tRNA from spontaneous hydrolysis and promotes its binding to the 30S ribosomal subunits. Also involved in the hydrolysis of GTP during the formation of the 70S ribosomal complex. This Arthrobacter sp. (strain FB24) protein is Translation initiation factor IF-2.